Consider the following 361-residue polypeptide: 3-dehydroquinate synthase (361 aa).

Residues 73 to 78 (DAEAGK), 107 to 111 (GAATD), 131 to 132 (TT), Lys144, Lys153, and 171 to 174 (TLET) contribute to the NAD(+) site. Zn(2+)-binding residues include Glu186, His249, and His265.

Belongs to the sugar phosphate cyclases superfamily. Dehydroquinate synthase family. NAD(+) is required as a cofactor. It depends on Co(2+) as a cofactor. Zn(2+) serves as cofactor.

The protein resides in the cytoplasm. It catalyses the reaction 7-phospho-2-dehydro-3-deoxy-D-arabino-heptonate = 3-dehydroquinate + phosphate. The protein operates within metabolic intermediate biosynthesis; chorismate biosynthesis; chorismate from D-erythrose 4-phosphate and phosphoenolpyruvate: step 2/7. Its function is as follows. Catalyzes the conversion of 3-deoxy-D-arabino-heptulosonate 7-phosphate (DAHP) to dehydroquinate (DHQ). This Mycobacterium leprae (strain TN) protein is 3-dehydroquinate synthase.